The sequence spans 545 residues: E3 ubiquitin-protein ligase ipaH9.8 (545 aa).

The tract at residues 1-242 (MLPINNNFSL…YHGPRIYFSM (242 aa)) is interaction with target proteins. LRR repeat units lie at residues 57–77 (NSDELRLDRLNLSSLPDNLPA), 78–99 (QITLLNVSYNQLTNLPELPVTL), 100–117 (KKLYSASNKLSELPVLPP), 118–139 (ALESLQVQHNELENLPALPDSL), 140–157 (LTMNISYNEIVSLPSLPQ), 158–179 (ALKNLRATRNFLTELPAFSEGN), 182–203 (VVREYFFDRNQISHIPESILNL), and 205–228 (NECSIHISDNPLSSHALPALQRLT). The interval 243–250 (SDGQQNTL) is linker. The E3 ubiquitin-protein ligase catalytic domain stretch occupies residues 251–545 (HRPLADAVTA…PENGSQLHHS (295 aa)). The region spanning 253-545 (PLADAVTAWF…PENGSQLHHS (293 aa)) is the NEL domain. Catalysis depends on Cys337, which acts as the Glycyl thioester intermediate.

This sequence belongs to the LRR-containing bacterial E3 ligase family. As to quaternary structure, also interacts with human and mouse U2AF1 (U2AF35). In terms of processing, autoubiquitinated (in vitro). Ubiquitinated in the presence of host E1 ubiquitin-activating enzyme, E2 ubiquitin-conjugating enzyme and ubiquitin.

The protein localises to the secreted. It localises to the host cytoplasm. The protein resides in the host nucleus. It carries out the reaction S-ubiquitinyl-[E2 ubiquitin-conjugating enzyme]-L-cysteine + [acceptor protein]-L-lysine = [E2 ubiquitin-conjugating enzyme]-L-cysteine + N(6)-ubiquitinyl-[acceptor protein]-L-lysine.. The protein operates within protein modification; protein ubiquitination. With respect to regulation, exists in an autoinhibited state in the absence of substrate protein, due to interactions of the leucine-rich repeats with NEL domain. Is activated upon binding to a substrate protein. Effector E3 ubiquitin ligase that interferes with host's ubiquitination pathway and modulates the acute inflammatory responses, thus facilitating bacterial colonization within the host cell. Interacts with IKBKG (NEMO) and TNIP1 (ABIN-1), a ubiquitin-binding adapter protein, which results in TNIP1-dependent 'Lys-27'-linked polyubiquitination of IKBKG. Consequently, polyubiquitinated IKBKG undergoes proteasome-dependent degradation, which perturbs NF-kappa-B activation during bacterial infection. Mediates polyubiquitination of host U2AF1, leading to its proteasomal degradation. Catalyzes 'Lys-48'-linked polyubiquitination and subsequent degradation of a subset of host guanylate-binding proteins (GBP1, GBP2, GBP4 and GBP6), thereby suppressing host cell defense. In contrast, host GBP3 and GBP7 are not ubiquitinated by IpaH9.8. Uses UBE2D2 (UBCH5B) as an E2 ubiquitin-conjugating enzyme. The protein is E3 ubiquitin-protein ligase ipaH9.8 of Shigella flexneri.